A 384-amino-acid chain; its full sequence is Actin-related protein 2/3 complex subunit 1 (384 aa).

WD repeat units follow at residues 61–99 (DHDK…TYKP), 105–146 (RINR…WVSK), 151–190 (PIKS…LDSK), 212–251 (YQGS…QSVN), and 349–383 (AHEN…VIYT).

This sequence belongs to the WD repeat ARPC1 family. In terms of assembly, component of the Arp2/3 complex composed of ARP2, ARP3, ARC40/p41-ARC, ARC35/p34-ARC, ARC18/p21-ARC, ARC19/p20-ARC and ARC16/p16-ARC.

The protein localises to the cytoplasm. It localises to the cytoskeleton. It is found in the actin patch. In terms of biological role, functions as a component of the Arp2/3 complex which is involved in regulation of actin polymerization and together with an activating nucleation-promoting factor (NPF) mediates the formation of branched actin networks. In Saccharomyces cerevisiae (strain ATCC 204508 / S288c) (Baker's yeast), this protein is Actin-related protein 2/3 complex subunit 1 (ARC40).